The following is a 317-amino-acid chain: Acetyl-coenzyme A carboxylase carboxyl transferase subunit alpha (317 aa).

In terms of domain architecture, CoA carboxyltransferase C-terminal spans Arg-39–Asp-293.

This sequence belongs to the AccA family. As to quaternary structure, acetyl-CoA carboxylase is a heterohexamer composed of biotin carboxyl carrier protein (AccB), biotin carboxylase (AccC) and two subunits each of ACCase subunit alpha (AccA) and ACCase subunit beta (AccD).

It is found in the cytoplasm. The enzyme catalyses N(6)-carboxybiotinyl-L-lysyl-[protein] + acetyl-CoA = N(6)-biotinyl-L-lysyl-[protein] + malonyl-CoA. The protein operates within lipid metabolism; malonyl-CoA biosynthesis; malonyl-CoA from acetyl-CoA: step 1/1. Functionally, component of the acetyl coenzyme A carboxylase (ACC) complex. First, biotin carboxylase catalyzes the carboxylation of biotin on its carrier protein (BCCP) and then the CO(2) group is transferred by the carboxyltransferase to acetyl-CoA to form malonyl-CoA. This Agrobacterium fabrum (strain C58 / ATCC 33970) (Agrobacterium tumefaciens (strain C58)) protein is Acetyl-coenzyme A carboxylase carboxyl transferase subunit alpha.